A 3011-amino-acid chain; its full sequence is Genome polyprotein (3011 aa).

Ser-2 bears the N-acetylserine; by host mark. Positions 2–23 (STNPKPQRKTKRNTNRRPQNVK) are interaction with STAT1. The tract at residues 2–58 (STNPKPQRKTKRNTNRRPQNVKFPGGGQIVGGVCLLPRRGPRVGVRATRKTSERSQP) is interaction with EIF2AK2/PKR. The tract at residues 2-59 (STNPKPQRKTKRNTNRRPQNVKFPGGGQIVGGVCLLPRRGPRVGVRATRKTSERSQPR) is interaction with DDX3X. The interval 2-75 (STNPKPQRKT…PKARRPEGRS (74 aa)) is disordered. Residues 2–168 (STNPKPQRKT…EDGVNYATGN (167 aa)) lie on the Cytoplasmic side of the membrane. 2 consecutive short sequence motifs (nuclear localization signal) follow at residues 5–13 (PKPQRKTKR) and 38–43 (PRRGPR). Residues 7–16 (PQRKTKRNTN) are compositionally biased toward basic residues. Ser-53 carries the phosphoserine; by host modification. 2 consecutive short sequence motifs (nuclear localization signal) follow at residues 58-64 (PRGRRQP) and 66-71 (PKARRP). Basic residues predominate over residues 58–68 (PRGRRQPIPKA). Ser-99 bears the Phosphoserine; by host mark. Positions 112 to 152 (PRRRSRNLGKVIDTLTCGFADLMGYIPLVGAPLGGAARALA) are important for endoplasmic reticulum and mitochondrial localization. Residue Ser-116 is modified to Phosphoserine; by host PKA. The interval 122-173 (VIDTLTCGFADLMGYIPLVGAPLGGAARALAHGVRVLEDGVNYATGNLPGCS) is interaction with APOA2. Residues 164-167 (YATG) form an important for lipid droplets localization region. The chain crosses the membrane as a helical span at residues 169 to 189 (LPGCSFSIFLLALLSCLTVPA). A propeptide spans 178–191 (LLALLSCLTVPASA) (ER anchor for the core protein, removed in mature form by host signal peptidase). Over 190–358 (SAVEVRNSSG…AGAHWGVLAG (169 aa)) the chain is Lumenal. Asn-196, Asn-209, and Asn-234 each carry an N-linked (GlcNAc...) asparagine; by host glycan. The segment at 265-296 (IVGAAAFCSAMYVGDLCGSIFLVGQLFTLSPR) is important for fusion. Asn-305 is a glycosylation site (N-linked (GlcNAc...) asparagine; by host). Residues 359–379 (PAYYSMVGNWAKVLVVLLLFA) form a helical membrane-spanning segment. At 380–725 (GVDATTQVTG…WEYVVLLFLL (346 aa)) the chain is on the lumenal side. Positions 385–411 (TQVTGGTAGRNAYRLASLFSTGPSQNI) are HVR1. Residues Asn-417, Asn-423, Asn-430, and Asn-448 are each glycosylated (N-linked (GlcNAc...) (high mannose) asparagine; by host). 3 cysteine pairs are disulfide-bonded: Cys-429–Cys-552, Cys-486–Cys-494, and Cys-503–Cys-508. The segment at 474–479 (YGGKAS) is HVR2. A CD81-binding 1 region spans residues 480-493 (NDQRPYCWHYAPRP). Asn-532 is a glycosylation site (N-linked (GlcNAc...) (high mannose) asparagine; by host). An N-linked (GlcNAc...) asparagine; by host glycan is attached at Asn-540. The segment at 544 to 551 (PPIGNWFG) is CD81-binding 2. N-linked (GlcNAc...) (high mannose) asparagine; by host glycosylation is present at Asn-556. Disulfide bonds link Cys-564/Cys-569, Cys-581/Cys-585, Cys-597/Cys-620, and Cys-607/Cys-644. N-linked (GlcNAc...) (high mannose) asparagine; by host glycans are attached at residues Asn-623 and Asn-645. Cys-652 and Cys-677 are oxidised to a cystine. Positions 660–671 (AELSPLLLSTTQ) are PKR/eIF2-alpha phosphorylation homology domain (PePHD). The chain crosses the membrane as a helical span at residues 726 to 746 (LADARICACLWMMLLISQVEA). Residues 747–757 (ALENLIVLNAA) lie on the Lumenal side of the membrane. A helical transmembrane segment spans residues 758 to 778 (SLAGTHGIVPFFIFFCAAWYL). Topologically, residues 779 to 781 (KGK) are cytoplasmic. Residues 782 to 803 (WAPGLVYSVYGMWPLLLLLLAL) traverse the membrane as a helical segment. Topologically, residues 804-813 (PQRAYALDQE) are lumenal. A helical transmembrane segment spans residues 814 to 834 (LAASCGAVVFISLAVLTLSPY). Residues 835–838 (YKQY) lie on the Cytoplasmic side of the membrane. Residues 839–859 (MARGIWWLQYMLTRAEALLHV) form a helical membrane-spanning segment. Over 860–881 (WVPSLNARGGRDGAILLMCVLH) the chain is Lumenal. The chain crosses the membrane as a helical span at residues 882–902 (PHLLFDITKIMLAILGPLWIL). A Peptidase C18 domain is found at 903–1026 (QASLLRVPYF…ALTDKGWRLL (124 aa)). The Cytoplasmic segment spans residues 903-1657 (QASLLRVPYF…CMSADLEVVT (755 aa)). A protease NS2-3 region spans residues 904–1206 (ASLLRVPYFV…PVESLETTMR (303 aa)). Residue Cys-922 is the site of S-palmitoyl cysteine; by host attachment. The segment at 929-949 (AGGHYVQMALLKLGALTGTYI) is interaction with host SCPS1. Active-site for protease NS2 activity; shared with dimeric partner residues include His-952, Glu-972, and Cys-993. The 182-residue stretch at 1027 to 1208 (APITAYAQQT…ESLETTMRSP (182 aa)) folds into the Peptidase S29 domain. Residues His-1083 and Asp-1107 each act as charge relay system; for serine protease NS3 activity in the active site. The Zn(2+) site is built by Cys-1123 and Cys-1125. The Charge relay system; for serine protease NS3 activity role is filled by Ser-1165. Zn(2+) is bound by residues Cys-1171 and His-1175. Residues 1217–1369 (PTVPQSYQVA…SNIEEVALSA (153 aa)) form the Helicase ATP-binding domain. 1230 to 1237 (APTGSGKS) lines the ATP pocket. The Mg(2+) site is built by Ser-1237 and Glu-1317. The DECH box motif lies at 1316–1319 (DECH). An RNA-binding region spans residues 1486-1497 (QRRGRTGRGKHG). Residues 1658–1678 (STWVLVGGVLAALAAYCLSTG) form a helical membrane-spanning segment. Residues 1679-1690 (SVVIVGRIILGG) are NS3-binding. The Cytoplasmic segment spans residues 1679–1805 (SVVIVGRIIL…AVTSPLTTQQ (127 aa)). Residues 1806–1824 (TLFFNILGGWVAAQLASPA) traverse the membrane as a helical segment. The Lumenal segment spans residues 1825 to 1828 (AATA). Residues 1829 to 1849 (FVGAGITGAVVGSVGLGKVLV) traverse the membrane as a helical segment. Position 1850 (Asp-1850) is a topological domain, cytoplasmic. Residues 1851 to 1871 (IIAGYGAGVAGALVAFKIMSG) traverse the membrane as a helical segment. Residues 1872–1881 (ETPTTEDLVN) are Lumenal-facing. A helical membrane pass occupies residues 1882-1902 (LLPAILSPGALVVGVVCAAIL). The Cytoplasmic portion of the chain corresponds to 1903 to 1972 (RRHVGPGEGA…WISSDCIAPC (70 aa)). 2 S-palmitoyl cysteine; by host lipidation sites follow: Cys-1968 and Cys-1972. Residues 1973–2002 (ASSWLKDVWDWICEVLSDFKNWLKAKLVPQ) lie within the membrane without spanning it. At 2003–2990 (LPGIPFVSCQ…YHSVSHARPR (988 aa)) the chain is on the cytoplasmic side. 4 residues coordinate Zn(2+): Cys-2011, Cys-2029, Cys-2031, and Cys-2052. The tract at residues 2120–2208 (EFFTEVDGVR…ASSSASQLSA (89 aa)) is FKBP8-binding. The transcriptional activation stretch occupies residues 2120-2332 (EFFTEVDGVR…PVPPPRRKRT (213 aa)). The interval 2135-2139 (PPCKP) is interaction with non-structural protein 4A. Residues 2187 to 2219 (ARRLKRGSPPSLASSSASQLSAPSLKATCTTHH) form a disordered region. The tract at residues 2189–2441 (RLKRGSPPSL…TPCASEEAKL (253 aa)) is interaction with host SKP2. The residue at position 2194 (Ser-2194) is a Phosphoserine; by host; in p56. Low complexity predominate over residues 2194 to 2211 (SPPSLASSSASQLSAPSL). A phosphoserine; by host; in p58 mark is found at Ser-2197, Ser-2201, Ser-2204, Ser-2207, and Ser-2210. The tract at residues 2210 to 2249 (SLKATCTTHHDSPDADLIEANLLWRQEMGGNITRVESENK) is ISDR. Residues 2210–2275 (SLKATCTTHH…REISIPAEIL (66 aa)) form an interaction with EIF2AK2/PKR region. Positions 2249 to 2306 (KIVVLDSFDPLVAEEDDREISIPAEILRKFKQFPPAMPIWARPDYNPPLVEPWKRPDY) are NS4B-binding. Positions 2322–2325 (TPVP) match the SH3-binding motif. Positions 2326–2334 (PPRRKRTVV) match the Nuclear localization signal motif. Lys-2350 participates in a covalent cross-link: Glycyl lysine isopeptide (Lys-Gly) (interchain with G-Cter in ubiquitin). Positions 2352–2369 (FGSSTTSGVTSGEATESS) are enriched in low complexity. The disordered stretch occupies residues 2352 to 2409 (FGSSTTSGVTSGEATESSPAPSCGGELDSEAESYSSMPPLEGEPGDPDLSDGSWSTVS). Residues 2354–2377 (SSTTSGVTSGEATESSPAPSCGGE) form a V3 region. 2 positions are modified to phosphoserine; by host: Ser-2449 and Ser-2462. The RdRp catalytic domain maps to 2634-2752 (PMGFSYDTRC…ICESAGVQED (119 aa)). Mg(2+) contacts are provided by Asp-2640, Asp-2738, and Asp-2739. The helical transmembrane segment at 2991–3011 (LFLWCLLLLSVGVGIYLLPNR) threads the bilayer.

Belongs to the hepacivirus polyprotein family. Homooligomer. Interacts with E1 (via C-terminus). Interacts with the non-structural protein 5A. Interacts (via N-terminus) with host STAT1 (via SH2 domain); this interaction results in decreased STAT1 phosphorylation and ubiquitin-mediated proteasome-dependent STAT1 degradation, leading to decreased IFN-stimulated gene transcription. Interacts with host STAT3; this interaction constitutively activates STAT3. Interacts with host LTBR receptor. Interacts with host TNFRSF1A receptor and possibly induces apoptosis. Interacts with host HNRPK. Interacts with host YWHAE. Interacts with host UBE3A/E6AP. Interacts with host DDX3X. Interacts with host APOA2. Interacts with host RXRA protein. Interacts with host SP110 isoform 3/Sp110b; this interaction sequesters the transcriptional corepressor SP110 away from the nucleus. Interacts with host CREB3 nuclear transcription protein; this interaction triggers cell transformation. Interacts with host ACY3. Interacts with host C1QR1. Interacts with host RBM24; this interaction, which enhances the interaction of the mature core protein with 5'-UTR, may inhibit viral translation and favor replication. Interacts with host EIF2AK2/PKR; this interaction induces the autophosphorylation of EIF2AK2. Part of the viral assembly initiation complex composed of NS2, E1, E2, NS3, NS4A, NS5A and the mature core protein. In terms of assembly, forms a heterodimer with envelope glycoprotein E2. Interacts with mature core protein. Interacts with protease NS2. The heterodimer E1/E2 interacts with host CLDN1; this interaction plays a role in viral entry into host cell. Interacts with host SPSB2 (via C-terminus). Part of the viral assembly initiation complex composed of NS2, E1, E2, NS3, NS4A, NS5A and the mature core protein. Interacts with host NEURL3; this interaction prevents E1 binding to glycoprotein E2. As to quaternary structure, forms a heterodimer with envelope glycoprotein E1. Interacts with host CD81 and SCARB1 receptors; these interactions play a role in viral entry into host cell. Interacts with host EIF2AK2/PKR; this interaction inhibits EIF2AK2 and probably allows the virus to evade the innate immune response. Interacts with host CD209/DC-SIGN and CLEC4M/DC-SIGNR. Interact with host SPCS1; this interaction is essential for viral particle assembly. Interacts with protease NS2. The heterodimer E1/E2 interacts with host CLDN1; this interaction plays a role in viral entry into host cell. Part of the viral assembly initiation complex composed of NS2, E1, E2, NS3, NS4A, NS5A and the mature core protein. Interacts with host SLC3A2/4F2hc; the interaction may facilitate viral entry into host cell. Interacts with human PLSCR1. Homohexamer. Homoheptamer. Interacts with protease NS2. In terms of assembly, homodimer. Interacts with host SPCS1; this interaction is essential for viral particle assembly. Interacts with envelope glycoprotein E1. Interacts with envelope glycoprotein E2. Interacts with viroporin p7. Interacts with serine protease/helicase NS3. Part of the replication complex composed of NS2, NS3, NS4A, NS4B, NS5A and the RNA-directed RNA polymerase embedded in an ER-derived membranous web. Part of the viral assembly initiation complex composed of NS2, E1, E2, NS3, NS4A, NS5A and the mature core protein. As to quaternary structure, interacts with protease NS2. Interacts with non-structural protein 4A; this interaction stabilizes the folding of NS3 serine protease. NS3-NS4A interaction is essential for NS3 activation and allows membrane anchorage of the latter. NS3/NS4A complex also prevents phosphorylation of host IRF3, thus preventing the establishment of dsRNA induced antiviral state. Interacts with host MAVS; this interaction leads to the cleavage and inhibition of host MAVS. Interacts with host TICAM1; this interaction leads to the cleavage and inhibition of host TICAM1. Interacts with host TANK-binding kinase/TBK1; this interaction results in the inhibition of the association between TBK1 and IRF3, which leads to the inhibition of IRF3 activation. Interacts with host RBM24. Part of the replication complex composed of NS2, NS3, NS4A, NS4B, NS5A and the RNA-directed RNA polymerase embedded in an ER-derived membranous web. Part of the viral assembly initiation complex composed of NS2, E1, E2, NS3, NS4A, NS5A and the mature core protein. Interacts with NS3 serine protease; this interaction stabilizes the folding of NS3 serine protease. NS3-NS4A interaction is essential for NS3 activation and allows membrane anchorage of the latter. Interacts with non-structural protein 5A (via N-terminus). Part of the replication complex composed of NS2, NS3, NS4A, NS4B, NS5A and the RNA-directed RNA polymerase embedded in an ER-derived membranous web. Part of the viral assembly initiation complex composed of NS2, E1, E2, NS3, NS4A, NS5A and the mature core protein. In terms of assembly, homomultimer. Interacts with non-structural protein NS5A. Interacts with host PLA2G4C; this interaction likely initiates the recruitment of replication complexes to lipid droplets. Interacts with host STING; this interaction disrupts the interaction between STING and TBK1 thereby suppressing the interferon signaling. Part of the replication complex composed of NS2, NS3, NS4A, NS4B, NS5A and the RNA-directed RNA polymerase embedded in an ER-derived membranous web. As to quaternary structure, monomer. Homodimer; dimerization is required for RNA-binding. Interacts with the mature core protein. Interacts (via N-terminus) with non-structural protein 4A. Interacts with non-structural protein 4B. Interacts (via region D2) with RNA-directed RNA polymerase. Part of the viral assembly initiation complex composed of NS2, E1, E2, NS3, NS4A, NS5A and the mature core protein. Part of the replication complex composed of NS2, NS3, NS4A, NS4B, NS5A and the RNA-directed RNA polymerase embedded in an ER-derived membranous web. Interacts with host GRB2. Interacts with host BIN1. Interacts with host PIK3R1. Interacts with host SRCAP. Interacts with host FKBP8. Interacts (via C-terminus) with host VAPB (via MSP domain). Interacts with host EIF2AK2/PKR; this interaction leads to disruption of EIF2AK2 dimerization by NS5A and probably allows the virus to evade the innate immune response. Interacts (via N-terminus) with host PACSIN2 (via N-terminus); this interaction attenuates protein kinase C alpha-mediated phosphorylation of PACSIN2 by disrupting the interaction between PACSIN2 and PRKCA. Interacts (via N-terminus) with host SRC kinase (via SH2 domain). Interacts with most Src-family kinases. Interacts with host IFI27 and SKP2; promotes the ubiquitin-mediated proteasomal degradation of NS5A. Interacts with host GPS2. Interacts with host TNFRSF21; this interaction allows the modulation by the virus of JNK, p38 MAPK, STAT3, and Akt signaling pathways in a DR6-dependent manner. Interacts (via N-terminus) with host CIDEB (via N-terminus); this interaction seems to regulate the association of HCV particles with APOE. Interacts with host CHKA/Choline Kinase-alpha; CHKA bridges host PI4KA and NS5A and potentiates NS5A-stimulated PI4KA activity, which then facilitates the targeting of the ternary complex to the ER for viral replication. Interacts with host SPSB2 (via C-terminus); this interaction targets NS5A for ubiquitination and degradation. Interacts with host RAB18; this interaction may promote the association of NS5A and other replicase components with lipid droplets. Interacts (via region D2) with host PPIA/CYPA; the interaction stimulates RNA-binding ability of NS5A and is dependent on the peptidyl-prolyl cis-trans isomerase activity of PPIA/CYPA. Interacts with host TRIM14; this interaction induces the degradation of NS5A. Homooligomer. Interacts with non-structural protein 5A. Interacts with host VAPB. Interacts with host PRK2/PKN2. Interacts with host HNRNPA1 and SEPT6; these interactions facilitate viral replication. Part of the replication complex composed of NS2, NS3, NS4A, NS4B, NS5A and the RNA-directed RNA polymerase. Zn(2+) is required as a cofactor. Requires Mg(2+) as cofactor. In terms of processing, specific enzymatic cleavages in vivo yield mature proteins. The structural proteins, core, E1, E2 and p7 are produced by proteolytic processing by host signal peptidases. The core protein precursor is synthesized as a 23 kDa, which is retained in the ER membrane through the hydrophobic signal peptide. Cleavage by the signal peptidase releases the 21 kDa mature core protein. The cleavage of the core protein precursor occurs between aminoacids 176 and 188 but the exact cleavage site is not known. Some degraded forms of the core protein appear as well during the course of infection. The other proteins (p7, NS2, NS3, NS4A, NS4B, NS5A and NS5B) are cleaved by the viral proteases. Autoprocessing between NS2 and NS3 is mediated by the NS2 cysteine protease catalytic domain and regulated by the NS3 N-terminal domain. Phosphorylated by host PKC and PKA. Post-translationally, ubiquitinated; mediated by UBE3A and leading to core protein subsequent proteasomal degradation. In terms of processing, highly N-glycosylated. Palmitoylation is required for NS2/3 autoprocessing and E2 recruitment to membranes. Post-translationally, palmitoylated. This modification may play a role in its polymerization or in protein-protein interactions. In terms of processing, phosphorylated on serines in a basal form termed p56. p58 is a hyperphosphorylated form of p56. p56 and p58 coexist in the cell in roughly equivalent amounts. Hyperphosphorylation is dependent on the presence of NS4A. Host CSNK1A1/CKI-alpha or RPS6KB1 kinases may be responsible for NS5A phosphorylation. Tyrosine phosphorylation is essential for the interaction with host SRC. Post-translationally, the N-terminus is phosphorylated by host PRK2/PKN2.

It localises to the host endoplasmic reticulum membrane. Its subcellular location is the host mitochondrion membrane. The protein resides in the virion. The protein localises to the host cytoplasm. It is found in the host nucleus. It localises to the host lipid droplet. Its subcellular location is the virion membrane. The protein resides in the host mitochondrion. The protein localises to the host cell membrane. It is found in the host perinuclear region. It catalyses the reaction Hydrolysis of four peptide bonds in the viral precursor polyprotein, commonly with Asp or Glu in the P6 position, Cys or Thr in P1 and Ser or Ala in P1'.. The enzyme catalyses a ribonucleoside 5'-triphosphate + H2O = a ribonucleoside 5'-diphosphate + phosphate + H(+). The catalysed reaction is ATP + H2O = ADP + phosphate + H(+). It carries out the reaction RNA(n) + a ribonucleoside 5'-triphosphate = RNA(n+1) + diphosphate. Inhibited by the antiviral drug hexamethylene amiloride. Inhibition by amantadine appears to be genotype-dependent. Also inhibited by long-alkyl-chain iminosugar derivatives. Its activity is regulated as follows. Activity is up-regulated by PRK2/PKN2-mediated phosphorylation. In terms of biological role, packages viral RNA to form a viral nucleocapsid, and promotes virion budding. Participates in the viral particle production as a result of its interaction with the non-structural protein 5A. Binds RNA and may function as a RNA chaperone to induce the RNA structural rearrangements taking place during virus replication. Modulates viral translation initiation by interacting with viral IRES and 40S ribosomal subunit. Affects various cell signaling pathways, host immunity and lipid metabolism. Prevents the establishment of cellular antiviral state by blocking the interferon-alpha/beta (IFN-alpha/beta) and IFN-gamma signaling pathways and by blocking the formation of phosphorylated STAT1 and promoting ubiquitin-mediated proteasome-dependent degradation of STAT1. Activates STAT3 leading to cellular transformation. Regulates the activity of cellular genes, including c-myc and c-fos. May repress the promoter of p53, and sequester CREB3 and SP110 isoform 3/Sp110b in the cytoplasm. Represses cell cycle negative regulating factor CDKN1A, thereby interrupting an important check point of normal cell cycle regulation. Targets transcription factors involved in the regulation of inflammatory responses and in the immune response: suppresses TNF-induced NF-kappa-B activation, and activates AP-1. Binds to dendritic cells (DCs) via C1QR1, resulting in down-regulation of T-lymphocytes proliferation. Alters lipid metabolism by interacting with hepatocellular proteins involved in lipid accumulation and storage. Induces up-regulation of FAS promoter activity, and thereby contributes to the increased triglyceride accumulation in hepatocytes (steatosis). Functionally, forms a heterodimer with envelope glycoprotein E2, which mediates virus attachment to the host cell, virion internalization through clathrin-dependent endocytosis and fusion with host membrane. Fusion with the host cell is most likely mediated by both E1 and E2, through conformational rearrangements of the heterodimer required for fusion rather than a classical class II fusion mechanism. E1/E2 heterodimer binds host apolipoproteins such as APOB and ApoE thereby forming a lipo-viro-particle (LVP). APOE associated to the LVP allows the initial virus attachment to cell surface receptors such as the heparan sulfate proteoglycans (HSPGs), syndecan-1 (SDC1), syndecan-1 (SDC2), the low-density lipoprotein receptor (LDLR) and scavenger receptor class B type I (SCARB1). The cholesterol transfer activity of SCARB1 allows E2 exposure and binding of E2 to SCARB1 and the tetraspanin CD81. E1/E2 heterodimer binding on CD81 activates the epithelial growth factor receptor (EGFR) signaling pathway. Diffusion of the complex E1-E2-EGFR-SCARB1-CD81 to the cell lateral membrane allows further interaction with Claudin 1 (CLDN1) and occludin (OCLN) to finally trigger HCV entry. Forms a heterodimer with envelope glycoprotein E1, which mediates virus attachment to the host cell, virion internalization through clathrin-dependent endocytosis and fusion with host membrane. Fusion with the host cell is most likely mediated by both E1 and E2, through conformational rearrangements of the heterodimer required for fusion rather than a classical class II fusion mechanism. The interaction between envelope glycoprotein E2 and host apolipoprotein E/APOE allows the proper assembly, maturation and infectivity of the viral particles. This interaction is probably promoted via the up-regulation of cellular autophagy by the virus. E1/E2 heterodimer binds host apolipoproteins such as APOB and APOE thereby forming a lipo-viro-particle (LVP). APOE associated to the LVP allows the initial virus attachment to cell surface receptors such as the heparan sulfate proteoglycans (HSPGs), syndecan-1 (SDC1), syndecan-1 (SDC2), the low-density lipoprotein receptor (LDLR) and scavenger receptor class B type I (SCARB1). The cholesterol transfer activity of SCARB1 allows E2 exposure and binding of E2 to SCARB1 and the tetraspanin CD81. E1/E2 heterodimer binding on CD81 activates the epithelial growth factor receptor (EGFR) signaling pathway. Diffusion of the complex E1-E2-EGFR-SCARB1-CD81 to the cell lateral membrane allows further interaction with Claudin 1 (CLDN1) and occludin (OCLN) to finally trigger HCV entry. Inhibits host EIF2AK2/PKR activation, preventing the establishment of an antiviral state. Viral ligand for CD209/DC-SIGN and CLEC4M/DC-SIGNR, which are respectively found on dendritic cells (DCs), and on liver sinusoidal endothelial cells and macrophage-like cells of lymph node sinuses. These interactions allow the capture of circulating HCV particles by these cells and subsequent facilitated transmission to permissive cells such as hepatocytes and lymphocyte subpopulations. The interaction between E2 and host amino acid transporter complex formed by SLC3A2 and SLC7A5/LAT1 may facilitate viral entry into host cell. Its function is as follows. Ion channel protein that acts as a viroporin and plays an essential role in the assembly, envelopment and secretion of viral particles. Regulates the host cell secretory pathway, which induces the intracellular retention of viral glycoproteins and favors assembly of viral particles. Creates a pore in acidic organelles and releases Ca(2+) and H(+) in the cytoplasm of infected cells, leading to a productive viral infection. High levels of cytoplasmic Ca(2+) may trigger membrane trafficking and transport of viral ER-associated proteins to viroplasms, sites of viral genome replication. This ionic imbalance induces the assembly of the inflammasome complex, which triggers the maturation of pro-IL-1beta into IL-1beta through the action of caspase-1. Targets also host mitochondria and induces mitochondrial depolarization. In addition of its role as a viroporin, acts as a lipid raft adhesion factor. In terms of biological role, cysteine protease required for the proteolytic auto-cleavage between the non-structural proteins NS2 and NS3. The N-terminus of NS3 is required for the function of NS2 protease (active region NS2-3). Promotes the initiation of viral particle assembly by mediating the interaction between structural and non-structural proteins. Functionally, displays three enzymatic activities: serine protease with a chymotrypsin-like fold, NTPase and RNA helicase. NS3 serine protease, in association with NS4A, is responsible for the cleavages of NS3-NS4A, NS4A-NS4B, NS4B-NS5A and NS5A-NS5B. The NS3/NS4A complex prevents phosphorylation of host IRF3, thus preventing the establishment of dsRNA induced antiviral state. The NS3/NS4A complex induces host amino acid transporter component SLC3A2, thus contributing to HCV propagation. NS3 RNA helicase binds to RNA and unwinds both dsDNA and dsRNA in the 3' to 5' direction, and likely resolves RNA complicated stable secondary structures in the template strand. Binds a single ATP and catalyzes the unzipping of a single base pair of dsRNA. Inhibits host antiviral proteins TBK1 and IRF3 thereby preventing the establishment of an antiviral state. Cleaves host MAVS/CARDIF thereby preventing the establishment of an antiviral state. Cleaves host TICAM1/TRIF, thereby disrupting TLR3 signaling and preventing the establishment of an antiviral state. Induces a specific membrane alteration that serves as a scaffold for the virus replication complex. This membrane alteration gives rise to the so-called ER-derived membranous web that contains the replication complex. NS4B self-interaction contributes to its function in membranous web formation. Promotes host TRIF protein degradation in a CASP8-dependent manner thereby inhibiting host TLR3-mediated interferon signaling. Disrupts the interaction between STING and TBK1 contributing to the inhibition of interferon signaling. Its function is as follows. Phosphorylated protein that is indispensable for viral replication and assembly. Both hypo- and hyperphosphorylated states are required for the viral life cycle. The hyperphosphorylated form of NS5A is an inhibitor of viral replication. Involved in RNA-binding and especially in binding to the viral genome. Zinc is essential for RNA-binding. Participates in the viral particle production as a result of its interaction with the mature viral core protein. Its interaction with host VAPB may target the viral replication complex to vesicles. Down-regulates viral IRES translation initiation. Mediates interferon resistance, presumably by interacting with and inhibiting host EIF2AK2/PKR. Prevents BIN1-induced apoptosis. Acts as a transcriptional activator of some host genes important for viral replication when localized in the nucleus. Via the interaction with host PACSIN2, modulates lipid droplet formation in order to promote virion assembly. Modulates TNFRSF21/DR6 signaling pathway for viral propagation. In terms of biological role, RNA-dependent RNA polymerase that performs primer-template recognition and RNA synthesis during viral replication. Initiates RNA transcription/replication at a flavin adenine dinucleotide (FAD), resulting in a 5'- FAD cap on viral RNAs. In this way, recognition of viral 5' RNA by host pattern recognition receptors can be bypassed, thereby evading activation of antiviral pathways. The chain is Genome polyprotein from Hepatitis C virus genotype 1c (isolate India) (HCV).